The primary structure comprises 562 residues: Efflux pump apf11 (562 aa).

Composition is skewed to low complexity over residues 1–10 (MGDISAATKA) and 18–30 (TPET…SSDT). Residues 1 to 36 (MGDISAATKAPAPPTPATPETNTTSSSSDTDVQHEP) form a disordered region. The N-linked (GlcNAc...) asparagine glycan is linked to N22. Transmembrane regions (helical) follow at residues 46-66 (LVIF…TIVA), 83-103 (AWYG…FGKI), 110-130 (KLVF…CALA), 141-161 (AIAG…TALT), 169-189 (VYTA…PIIG), 200-220 (WCFW…VFCL), 249-269 (GGLA…WGGT), and 278-298 (IIVL…HQHW). N312 is a glycosylation site (N-linked (GlcNAc...) asparagine). 6 consecutive transmembrane segments (helical) span residues 317–337 (MFLL…YYLP), 356–376 (LAMV…AGAV), 382–404 (FVFF…HPSI), 414–434 (ILFG…VQVA), 447–467 (VMLV…TLFL), and 516–536 (FLIG…IRWI).

It belongs to the major facilitator superfamily. TCR/Tet family.

It localises to the membrane. Its pathway is secondary metabolite biosynthesis. Functionally, efflux pump; part of the gene cluster that mediates the biosynthesis of the cyclic tetrapeptide apicidin F (APF). The protein is Efflux pump apf11 (apf11) of Gibberella fujikuroi (strain CBS 195.34 / IMI 58289 / NRRL A-6831) (Bakanae and foot rot disease fungus).